The following is a 447-amino-acid chain: N-succinylarginine dihydrolase (447 aa).

Substrate is bound by residues 19–28 (AGLSFGNKAS), asparagine 110, and 137–138 (HR). Glutamate 174 is a catalytic residue. Position 212 (arginine 212) interacts with substrate. The active site involves histidine 248. Positions 250 and 359 each coordinate substrate. Residue cysteine 365 is the Nucleophile of the active site.

The protein belongs to the succinylarginine dihydrolase family. Homodimer.

The catalysed reaction is N(2)-succinyl-L-arginine + 2 H2O + 2 H(+) = N(2)-succinyl-L-ornithine + 2 NH4(+) + CO2. It participates in amino-acid degradation; L-arginine degradation via AST pathway; L-glutamate and succinate from L-arginine: step 2/5. Functionally, catalyzes the hydrolysis of N(2)-succinylarginine into N(2)-succinylornithine, ammonia and CO(2). The protein is N-succinylarginine dihydrolase of Escherichia coli O157:H7.